The following is a 404-amino-acid chain: MKLPIYLDYAATTPVDPRVAEKMFQCMTMDGIFGNPASRSHRYGWQAEEAVDIARNQIAELINADHREIVFTSGATESNNLAIKGVAHFYHKKGKHIITSKTEHKAVLDTCRQLEREGFEVTYLEPAANGIIPMERLEAAMRDDTILVSIMHVNNEIGVIHDIDAIGELCRSKGIIFHMDAAQSAGKVPIDVQATKVDLISISGHKMYGPKGIGALYVRRKPRIRLEAQMHGGGHERGMRSGTLPTHQIVGLGEAAAIAKAEMASDDARIGALRDKLWNGIKHIEETYINGDAIERVSGSLNVSFNYVEGESLMMALKDLAVSSGSACTSASLEPSYVLRALGLNDEMAHSSIRFSIGRFTTEEEIDHAIEVITQSIDKLREMSPLWEMFKDGIDLNQVQWAHH.

Pyridoxal 5'-phosphate-binding positions include 75–76 (AT), asparagine 155, glutamine 183, and 203–205 (SGH). At lysine 206 the chain carries N6-(pyridoxal phosphate)lysine. Threonine 243 contacts pyridoxal 5'-phosphate. Cysteine 328 acts as the Cysteine persulfide intermediate in catalysis. Cysteine 328 is a binding site for [2Fe-2S] cluster.

It belongs to the class-V pyridoxal-phosphate-dependent aminotransferase family. NifS/IscS subfamily. Homodimer. Forms a heterotetramer with IscU, interacts with other sulfur acceptors. It depends on pyridoxal 5'-phosphate as a cofactor.

It localises to the cytoplasm. The catalysed reaction is (sulfur carrier)-H + L-cysteine = (sulfur carrier)-SH + L-alanine. It functions in the pathway cofactor biosynthesis; iron-sulfur cluster biosynthesis. Master enzyme that delivers sulfur to a number of partners involved in Fe-S cluster assembly, tRNA modification or cofactor biosynthesis. Catalyzes the removal of elemental sulfur atoms from cysteine to produce alanine. Functions as a sulfur delivery protein for Fe-S cluster synthesis onto IscU, an Fe-S scaffold assembly protein, as well as other S acceptor proteins. This chain is Cysteine desulfurase IscS, found in Shewanella baltica (strain OS185).